The primary structure comprises 793 residues: DnaJ homolog subfamily C member 10 (793 aa).

An N-terminal signal peptide occupies residues 1–32 (MGVWLSKDDYIRDLKRIILCFLIVYMAILVGT). Residues 35 to 100 (DFYSLLGVSK…DLRKKYDKYG (66 aa)) form the J domain. Residues 130–232 (EIITLERREF…ESLVSFAMQH (103 aa)) enclose the Thioredoxin 1 domain. A disulfide bridge connects residues C158 and C161. Trxb regions lie at residues 235–350 (STVT…LPDF) and 348–463 (PDFE…PQNF). Thioredoxin domains follow at residues 454 to 553 (HVTT…IEDL), 557 to 662 (SVVS…SLRI), and 671 to 778 (VSTG…INEK). The cysteines at positions 480 and 483 are disulfide-linked. The N-linked (GlcNAc...) asparagine glycan is linked to N530. 2 disulfides stabilise this stretch: C588–C591 and C700–C703. The Prevents secretion from ER motif lies at 790–793 (KDEL).

Interacts with HSPA5 (via its J domain). Interacts with EDEM1.

The protein resides in the endoplasmic reticulum lumen. Functionally, endoplasmic reticulum disulfide reductase involved both in the correct folding of proteins and degradation of misfolded proteins. Required for efficient folding of proteins in the endoplasmic reticulum by catalyzing the removal of non-native disulfide bonds formed during the folding of proteins, such as LDLR. Also involved in endoplasmic reticulum-associated degradation (ERAD) by reducing incorrect disulfide bonds in misfolded glycoproteins recognized by EDEM1. Interaction with HSPA5 is required its activity, not for the disulfide reductase activity, but to facilitate the release of DNAJC10 from its substrate. Promotes apoptotic signaling pathway in response to endoplasmic reticulum stress. In Pongo abelii (Sumatran orangutan), this protein is DnaJ homolog subfamily C member 10 (DNAJC10).